The chain runs to 71 residues: MSEKLIVKCPTCRTEVIWDESSPYRPFCCKRCQLIDLGEWAAEEKRIPSQSESNDSDEWSEMPEQDPKPFN.

The Zn(2+) site is built by Cys9, Cys12, Cys28, and Cys32. A disordered region spans residues 43–71 (EEKRIPSQSESNDSDEWSEMPEQDPKPFN). The segment covering 54–64 (NDSDEWSEMPE) has biased composition (acidic residues).

It belongs to the DNA gyrase inhibitor YacG family. Interacts with GyrB. Zn(2+) serves as cofactor.

Functionally, inhibits all the catalytic activities of DNA gyrase by preventing its interaction with DNA. Acts by binding directly to the C-terminal domain of GyrB, which probably disrupts DNA binding by the gyrase. The sequence is that of DNA gyrase inhibitor YacG from Proteus mirabilis (strain HI4320).